A 158-amino-acid chain; its full sequence is NAD(P)H-quinone oxidoreductase subunit N (158 aa).

This sequence belongs to the complex I NdhN subunit family. In terms of assembly, NDH-1 can be composed of about 15 different subunits; different subcomplexes with different compositions have been identified which probably have different functions.

It localises to the cellular thylakoid membrane. The enzyme catalyses a plastoquinone + NADH + (n+1) H(+)(in) = a plastoquinol + NAD(+) + n H(+)(out). It carries out the reaction a plastoquinone + NADPH + (n+1) H(+)(in) = a plastoquinol + NADP(+) + n H(+)(out). NDH-1 shuttles electrons from an unknown electron donor, via FMN and iron-sulfur (Fe-S) centers, to quinones in the respiratory and/or the photosynthetic chain. The immediate electron acceptor for the enzyme in this species is believed to be plastoquinone. Couples the redox reaction to proton translocation, and thus conserves the redox energy in a proton gradient. Cyanobacterial NDH-1 also plays a role in inorganic carbon-concentration. This Cyanothece sp. (strain PCC 7425 / ATCC 29141) protein is NAD(P)H-quinone oxidoreductase subunit N.